The following is a 369-amino-acid chain: Chaperone protein DnaJ (369 aa).

Positions 7 to 73 constitute a J domain; it reads DYYEILGVPR…QKRAMYDRFG (67 aa). Residues 143-225 form a CR-type zinc finger; the sequence is GAEIPVEYER…CGGSGRVLRK (83 aa). Residues Cys-156, Cys-159, Cys-173, Cys-176, Cys-199, Cys-202, Cys-213, and Cys-216 each coordinate Zn(2+). CXXCXGXG motif repeat units follow at residues 156 to 163, 173 to 180, 199 to 206, and 213 to 220; these read CPRCGGTG, CPSCGGTG, CERCGGTG, and CHECGGSG.

This sequence belongs to the DnaJ family. In terms of assembly, homodimer. Requires Zn(2+) as cofactor.

It is found in the cytoplasm. Functionally, participates actively in the response to hyperosmotic and heat shock by preventing the aggregation of stress-denatured proteins and by disaggregating proteins, also in an autonomous, DnaK-independent fashion. Unfolded proteins bind initially to DnaJ; upon interaction with the DnaJ-bound protein, DnaK hydrolyzes its bound ATP, resulting in the formation of a stable complex. GrpE releases ADP from DnaK; ATP binding to DnaK triggers the release of the substrate protein, thus completing the reaction cycle. Several rounds of ATP-dependent interactions between DnaJ, DnaK and GrpE are required for fully efficient folding. Also involved, together with DnaK and GrpE, in the DNA replication of plasmids through activation of initiation proteins. This chain is Chaperone protein DnaJ, found in Thermotoga maritima (strain ATCC 43589 / DSM 3109 / JCM 10099 / NBRC 100826 / MSB8).